A 330-amino-acid chain; its full sequence is MATSLRLLDAGPGSLRRWIPTCFAALLLLPPRPNLGYNEDHAEPVCGAPWWSDSLEERHHWPWEVSLQIENEHVCGGALIDQSWVVSAAHCIQGNKEYLVMLGSSTLQPSGSPWALKIPVGDIIMHPKYWGQNFIRSDIALLCLETPVTFNKYIQPICLPEHNFNLKVGMKCWVTGWGQAKQHPSAKLTRSLELWEAEVSIVDNKNCDRVFHKKTFYPQVIPLIRKNMICTTNHRENPCYGDPGGPLACEVHGRWILAGIFSWEKACTKAPNLSVYTRIDKYTGWIKEQVSRGARSGRCRTSCLLFLPWLLQLPVSPGPPHPFLFLLCLC.

A signal peptide spans 1 to 35 (MATSLRLLDAGPGSLRRWIPTCFAALLLLPPRPNL). One can recognise a Peptidase S1 domain in the interval 45–291 (VCGAPWWSDS…YTGWIKEQVS (247 aa)). 4 disulfides stabilise this stretch: Cys75–Cys91, Cys172–Cys249, Cys207–Cys230, and Cys239–Cys267. Asn272 carries an N-linked (GlcNAc...) asparagine glycan.

It belongs to the peptidase S1 family.

The protein localises to the secreted. The chain is Inactive serine protease 45 (Prss45) from Rattus norvegicus (Rat).